The following is a 335-amino-acid chain: DNA-directed RNA polymerase subunit alpha (335 aa).

The alpha N-terminal domain (alpha-NTD) stretch occupies residues 1 to 233 (MMLNATEFLT…QQISIFVDLE (233 aa)). An alpha C-terminal domain (alpha-CTD) region spans residues 247-335 (VDPVLLRPVD…VDDRFSYRSR (89 aa)).

The protein belongs to the RNA polymerase alpha chain family. Homodimer. The RNAP catalytic core consists of 2 alpha, 1 beta, 1 beta' and 1 omega subunit. When a sigma factor is associated with the core the holoenzyme is formed, which can initiate transcription.

The catalysed reaction is RNA(n) + a ribonucleoside 5'-triphosphate = RNA(n+1) + diphosphate. Functionally, DNA-dependent RNA polymerase catalyzes the transcription of DNA into RNA using the four ribonucleoside triphosphates as substrates. This is DNA-directed RNA polymerase subunit alpha from Psychrobacter arcticus (strain DSM 17307 / VKM B-2377 / 273-4).